The primary structure comprises 933 residues: MRVKDTLNLGKTKFKMRGNLPVNEQKREDIWAENKIYEQRQKLNEGKPSFVLHDGPPYANGNIHMGHAMNKISKDIIVRYKSMSGFRSPFVPGWDTHGLPIEQQLTKEGYDRKKMSTADFRKLCHEYALKQVDKQRTDFKRLGISAEWDHPYLTLNPEFEAQEIRTFGRMAELGLIYRGKKPVFWSWSSESAMAEAEVEYHDVTSPSAFYAEKVNDGKGVLDENTYFVVWTTTPWTIPASEGITIDAGFDYSVVQPAGEDRKFVIATDRLNYAAEQFGWEDVQTLQVIRGRELDRIKAIHPFDNDRELVVMLGDFVTLDSGTGLVHTAPGFGEDDFRVGKEYGLDIFVPVDDRGYMTAEAGPDFEGVFYEDANAIALDKLKASNALLKQMDYVHSYPFDWRTKKPIIFRATPQWFASVDKIRDQILEAIEDVEFLPDWGQKRLHNMIRDRGDWVISRQRVWGVPLPIFYAEDGTPILEKETINHVADLFEKNGSDIWFQWEAKDLLPEGYSNEHSPNGEFTKENDIMDVWFDSGSSHQGVLAQRDYLEYPADLVLEGSDQYRGWFNSSLITSVAVSGKAPYKKVISQGFTLDGKGHKMSKSLGNTIVPDEINKKMGAEIIRLWVSSIDSSSDVRVSQENFVKASESYKKIRNTVRYLLANTSDFDPKENGVDYNELRPEDRYMLVQFNELISKIRTSYDNYDFIDIYKTLLNYIITDLSAFYLDFAKDVVYIEPENSLKRRSMQTVFYKILVGLTKLITPILPHTAEEIWEYLREPEEFVQLAEMPEVANYTDGADLLSKWQSIKELRSHVLKALEEARDSKMIGKSMEAKATLYLDESTKQLVDTLGVDLRLILIVSQLEVKALSEAPKDAAIFDDQLAVEITPAQGEVCERCRMTKTDVGSDEHFATLCASCAQIVTENYPEAITEGFEEK.

The short motif at 57–67 is the 'HIGH' region element; sequence PYANGNIHMGH. E556 serves as a coordination point for L-isoleucyl-5'-AMP. The short motif at 597–601 is the 'KMSKS' region element; the sequence is KMSKS. Position 600 (K600) interacts with ATP. Residues C891, C894, C911, and C914 each coordinate Zn(2+).

It belongs to the class-I aminoacyl-tRNA synthetase family. IleS type 1 subfamily. In terms of assembly, monomer. Zn(2+) is required as a cofactor.

It is found in the cytoplasm. It carries out the reaction tRNA(Ile) + L-isoleucine + ATP = L-isoleucyl-tRNA(Ile) + AMP + diphosphate. Catalyzes the attachment of isoleucine to tRNA(Ile). As IleRS can inadvertently accommodate and process structurally similar amino acids such as valine, to avoid such errors it has two additional distinct tRNA(Ile)-dependent editing activities. One activity is designated as 'pretransfer' editing and involves the hydrolysis of activated Val-AMP. The other activity is designated 'posttransfer' editing and involves deacylation of mischarged Val-tRNA(Ile). In Pediococcus pentosaceus (strain ATCC 25745 / CCUG 21536 / LMG 10740 / 183-1w), this protein is Isoleucine--tRNA ligase.